The following is a 268-amino-acid chain: uncharacterized protein (268 aa).

The protein to M.tuberculosis Rv0025 and Rv0026.

This is an uncharacterized protein from Mycobacterium tuberculosis (strain CDC 1551 / Oshkosh).